A 1377-amino-acid chain; its full sequence is DNA-directed RNA polymerase subunit beta' (1377 aa).

Zn(2+) is bound by residues Cys60, Cys62, Cys75, and Cys78. Residues Asp449, Asp451, and Asp453 each contribute to the Mg(2+) site. 4 residues coordinate Zn(2+): Cys777, Cys851, Cys858, and Cys861.

Belongs to the RNA polymerase beta' chain family. In terms of assembly, the RNAP catalytic core consists of 2 alpha, 1 beta, 1 beta' and 1 omega subunit. When a sigma factor is associated with the core the holoenzyme is formed, which can initiate transcription. Mg(2+) is required as a cofactor. Requires Zn(2+) as cofactor.

The catalysed reaction is RNA(n) + a ribonucleoside 5'-triphosphate = RNA(n+1) + diphosphate. Functionally, DNA-dependent RNA polymerase catalyzes the transcription of DNA into RNA using the four ribonucleoside triphosphates as substrates. The sequence is that of DNA-directed RNA polymerase subunit beta' from Borrelia turicatae (strain 91E135).